The sequence spans 257 residues: Alkaline phosphatase synthesis transcriptional regulatory protein SphR (257 aa).

The region spanning 25-148 (RILVVEDEAV…ELVARCRALL (124 aa)) is the Response regulatory domain. Asp-83 is subject to 4-aspartylphosphate. A DNA-binding region (ompR/PhoB-type) is located at residues 159–257 (PAVLRYEGLK…TVRGFGYRLG (99 aa)).

Phosphorylated by SphS.

Its function is as follows. Member of the two-component regulatory system SphR/SphS. Response regulator. Involved in inducible production of alkaline phosphatase in response to phosphate limitation as it is directly involved in the regulation of phoA transcription in response to phosphate limitation. Binds to two distinct sites upstream from the phoA promoter. This chain is Alkaline phosphatase synthesis transcriptional regulatory protein SphR (sphR), found in Synechococcus elongatus (strain ATCC 33912 / PCC 7942 / FACHB-805) (Anacystis nidulans R2).